A 591-amino-acid chain; its full sequence is MAKKLGKSPVAKEEDKEGLFASCSFTDLGLHPTLCAHLQDKMGFQAPTRIQAQAIPVAMSGQHMLVKAATGTGKTLAYLAPIVHLLQMREPRVERTDGTFALVLVPTRELCLQVYGIAQQLVHRFHWLVPGYIMGGENRAKEKARLRKGISILIATPGRLLDHLQHTSSFVYPNMRWIVFDEADSILELGFGKALEDILEHLGSRNDTSNQNKNKMEPMKRQNLLLSATLNEKVNRLAKISLKNPVMIGLDEQNSSAHGKNHTSLLSDDEEEILEKHNVTVEQAVDDFKLPAQLVQRYVKVSCGSRLAILLTILKSLFERQLSHKVVVFLSTCDSVDFHHTVLSQLEWSPGLQLDTDKKQKFISCKVFRLHGNMDQDDRKKSFLGFSSEKSAILVSTDVAARGLDFPKVKCIIQYDSPGEASEYVHRVGRTARIGEKGEALLFLQPIETDYLRDLELHGASLTEYPLQKVLDSFPVNGQRLHKRKQISLDMHPWIMSLQRALESFVTSEDTTKKLARDAFCSWVRAYTAHRGELKKIFMVKKLHLGHVARSFGLKEQPSLLGRSHQVQLKKRKKEQKRERPAKRRKIPAKR.

A Q motif motif is present at residues 23–52; sequence CSFTDLGLHPTLCAHLQDKMGFQAPTRIQA. The 194-residue stretch at 55 to 248 folds into the Helicase ATP-binding domain; the sequence is IPVAMSGQHM…KISLKNPVMI (194 aa). 68-75 contributes to the ATP binding site; the sequence is AATGTGKT. The DEAD box motif lies at 181–184; sequence DEAD. The Helicase C-terminal domain occupies 293 to 482; it reads QLVQRYVKVS…SFPVNGQRLH (190 aa). The interval 562–591 is disordered; that stretch reads GRSHQVQLKKRKKEQKRERPAKRRKIPAKR. Basic residues predominate over residues 568 to 591; the sequence is QLKKRKKEQKRERPAKRRKIPAKR.

The protein belongs to the DEAD box helicase family. DDX31/DBP7 subfamily. As to expression, expressed in flowers and pollen grains.

The protein localises to the nucleus. It carries out the reaction ATP + H2O = ADP + phosphate + H(+). Its function is as follows. May play a role in organellar ribosome biogenesis and suppress 16S rRNA maturation. The protein is DEAD-box ATP-dependent RNA helicase 17 of Oryza sativa subsp. japonica (Rice).